The chain runs to 144 residues: HISAEIMQLHHSKHHAAYVNNVNVVEEKLAEALGKGDVNTQVSLQPAFRFNGGGHINHSIFWRNLSPSGGGQPCGDLLKAIENDFGSVDKLREKLVAAAVGVQGSGWAWLGFNKESKRLQIATCANQDPLQGTTGLFPLLGIDV.

Mn(2+)-binding residues include histidine 10, histidine 58, and aspartate 143.

Belongs to the iron/manganese superoxide dismutase family. Homotetramer. Mn(2+) is required as a cofactor.

It localises to the mitochondrion matrix. It carries out the reaction 2 superoxide + 2 H(+) = H2O2 + O2. In terms of biological role, destroys superoxide anion radicals which are normally produced within the cells and which are toxic to biological systems. The polypeptide is Superoxide dismutase [Mn], mitochondrial (Eptatretus stoutii (Pacific hagfish)).